The primary structure comprises 225 residues: Biosynthetic peptidoglycan transglycosylase (225 aa).

A helical membrane pass occupies residues 8–28; it reads VLLIFIGAILLIQLWIFSSLV.

It belongs to the glycosyltransferase 51 family.

Its subcellular location is the cell inner membrane. It catalyses the reaction [GlcNAc-(1-&gt;4)-Mur2Ac(oyl-L-Ala-gamma-D-Glu-L-Lys-D-Ala-D-Ala)](n)-di-trans,octa-cis-undecaprenyl diphosphate + beta-D-GlcNAc-(1-&gt;4)-Mur2Ac(oyl-L-Ala-gamma-D-Glu-L-Lys-D-Ala-D-Ala)-di-trans,octa-cis-undecaprenyl diphosphate = [GlcNAc-(1-&gt;4)-Mur2Ac(oyl-L-Ala-gamma-D-Glu-L-Lys-D-Ala-D-Ala)](n+1)-di-trans,octa-cis-undecaprenyl diphosphate + di-trans,octa-cis-undecaprenyl diphosphate + H(+). It participates in cell wall biogenesis; peptidoglycan biosynthesis. Peptidoglycan polymerase that catalyzes glycan chain elongation from lipid-linked precursors. This is Biosynthetic peptidoglycan transglycosylase from Acinetobacter baumannii (strain ACICU).